The following is a 124-amino-acid chain: Glutaredoxin-2 (124 aa).

The cysteines at positions 13 and 16 are disulfide-linked.

It belongs to the glutaredoxin family. Homodimer.

Its subcellular location is the host cytoplasm. Its function is as follows. Glutaredoxin necessary for virion morphogenesis and virus replication. Functions as a thiol-disulfide transfer protein between membrane-associated OPG128 and substrates OPG095 or OPG053. The complete pathway for formation of disulfide bonds in intracellular virion membrane proteins sequentially involves oxidation of OPG072, OPG128 and OPG088. Exhibit thioltransferase and dehydroascorbate reductase activities in vitro. This chain is Glutaredoxin-2 (OPG088), found in Oryctolagus cuniculus (Rabbit).